We begin with the raw amino-acid sequence, 161 residues long: Ribonuclease P protein component 2 (161 aa).

The protein belongs to the eukaryotic/archaeal RNase P protein component 2 family. Consists of a catalytic RNA component and at least 4-5 protein subunits.

Its subcellular location is the cytoplasm. The catalysed reaction is Endonucleolytic cleavage of RNA, removing 5'-extranucleotides from tRNA precursor.. In terms of biological role, part of ribonuclease P, a protein complex that generates mature tRNA molecules by cleaving their 5'-ends. This chain is Ribonuclease P protein component 2, found in Haloarcula marismortui (strain ATCC 43049 / DSM 3752 / JCM 8966 / VKM B-1809) (Halobacterium marismortui).